The sequence spans 221 residues: 7-cyano-7-deazaguanine synthase (221 aa).

ATP is bound at residue 10–20; it reads FSGGQDSTTCL. Zn(2+) is bound by residues Cys186, Cys195, Cys198, and Cys201.

Belongs to the QueC family. As to quaternary structure, homodimer. Zn(2+) is required as a cofactor.

The catalysed reaction is 7-carboxy-7-deazaguanine + NH4(+) + ATP = 7-cyano-7-deazaguanine + ADP + phosphate + H2O + H(+). It functions in the pathway purine metabolism; 7-cyano-7-deazaguanine biosynthesis. Its function is as follows. Catalyzes the ATP-dependent conversion of 7-carboxy-7-deazaguanine (CDG) to 7-cyano-7-deazaguanine (preQ(0)). In Geobacillus thermodenitrificans (strain NG80-2), this protein is 7-cyano-7-deazaguanine synthase.